We begin with the raw amino-acid sequence, 152 residues long: Ferredoxin-thioredoxin reductase catalytic chain, chloroplastic (152 aa).

The transit peptide at 1-38 (MTSTVTTTVGCGGLPVRPLSTATRGRPRRCAVRAQAAG) directs the protein to the chloroplast. Cysteine 91 lines the [4Fe-4S] cluster pocket. Cysteine 93 serves as the catalytic Nucleophile. A disulfide bond links cysteine 93 and cysteine 123. Residues cysteine 110, cysteine 112, and cysteine 121 each coordinate [4Fe-4S] cluster.

This sequence belongs to the ferredoxin thioredoxin reductase beta subunit family. As to quaternary structure, heterodimer of subunit A (variable subunit) and subunit B (catalytic subunit). Heterodimeric FTR forms a complex with ferredoxin and thioredoxin. Requires [4Fe-4S] cluster as cofactor.

The protein resides in the plastid. Its subcellular location is the chloroplast. It catalyses the reaction [thioredoxin]-disulfide + 2 reduced [2Fe-2S]-[ferredoxin] + 2 H(+) = [thioredoxin]-dithiol + 2 oxidized [2Fe-2S]-[ferredoxin]. Its function is as follows. Catalytic subunit of the ferredoxin-thioredoxin reductase (FTR), which catalyzes the two-electron reduction of thioredoxins by the electrons provided by reduced ferredoxin. The chain is Ferredoxin-thioredoxin reductase catalytic chain, chloroplastic (FTRC) from Zea mays (Maize).